The primary structure comprises 457 residues: MSECVVRGGQVVQAGGVVSADVAIEDGRISAIGPELPGAKREINARGLTVFPGVIDDHLHFNEPGRTEWEGAATGSRALAAGGGTAFFDMPLNSTPCTVDRAAFAGKRAALERASIADFALWGGIVPGNLSELAPLAESGVIGFKAFLSDSGLPEFPRADDLTLYEGMREAARLGLPVAVHAESEEITSRLTRRARDAGRTSARDYLDSRPVIAEVEAIHRAALLAREAGCKLHIVHISSGRGVAAALEARTMGTDIAIETCAHYLFFTEDDLLRLGAIAKCAPPLRDRQEFDRLWAHVLGGIVDVVASDHSPAPPAMKTGDDFFAIWGGIAGVQSTLAVLLEAGHFQRGLRLERIAELTAGYPARRFALHNKGSIAVGNDADLTLVDMDGQENLEPESLWQKHPVNPYTGNSFRGSIRRTMLRGTTIFNHDEITVKSGGQLLRPKANTYATSGIHP.

Zn(2+)-binding residues include His58, His60, Lys145, His181, His237, and Asp310. Lys145 is subject to N6-carboxylysine.

It belongs to the metallo-dependent hydrolases superfamily. Allantoinase family. Homotetramer. It depends on Zn(2+) as a cofactor. Post-translationally, carboxylation allows a single lysine to coordinate two zinc ions.

The enzyme catalyses (S)-allantoin + H2O = allantoate + H(+). It functions in the pathway nitrogen metabolism; (S)-allantoin degradation; allantoate from (S)-allantoin: step 1/1. Its function is as follows. Catalyzes the conversion of allantoin (5-ureidohydantoin) to allantoic acid by hydrolytic cleavage of the five-member hydantoin ring. This is Allantoinase from Solibacter usitatus (strain Ellin6076).